The following is a 176-amino-acid chain: Ribosome rescue factor SmrB (176 aa).

The region spanning leucine 93–aspartate 168 is the Smr domain.

This sequence belongs to the SmrB family. In terms of assembly, associates with collided ribosomes, but not with correctly translating polysomes.

Functionally, acts as a ribosome collision sensor. Detects stalled/collided disomes (pairs of ribosomes where the leading ribosome is stalled and a second ribosome has collided with it) and endonucleolytically cleaves mRNA at the 5' boundary of the stalled ribosome. Stalled/collided disomes form a new interface (primarily via the 30S subunits) that binds SmrB. Cleaved mRNA becomes available for tmRNA ligation, leading to ribosomal subunit dissociation and rescue of stalled ribosomes. This is Ribosome rescue factor SmrB from Shewanella sp. (strain MR-4).